We begin with the raw amino-acid sequence, 308 residues long: Aspartate carbamoyltransferase catalytic subunit (308 aa).

Carbamoyl phosphate contacts are provided by arginine 59 and threonine 60. Residue lysine 87 coordinates L-aspartate. Residues arginine 109, histidine 139, and glutamine 142 each contribute to the carbamoyl phosphate site. The L-aspartate site is built by arginine 172 and arginine 224. Alanine 265 and proline 266 together coordinate carbamoyl phosphate.

This sequence belongs to the aspartate/ornithine carbamoyltransferase superfamily. ATCase family. In terms of assembly, heterododecamer (2C3:3R2) of six catalytic PyrB chains organized as two trimers (C3), and six regulatory PyrI chains organized as three dimers (R2).

It catalyses the reaction carbamoyl phosphate + L-aspartate = N-carbamoyl-L-aspartate + phosphate + H(+). Its pathway is pyrimidine metabolism; UMP biosynthesis via de novo pathway; (S)-dihydroorotate from bicarbonate: step 2/3. Its function is as follows. Catalyzes the condensation of carbamoyl phosphate and aspartate to form carbamoyl aspartate and inorganic phosphate, the committed step in the de novo pyrimidine nucleotide biosynthesis pathway. This Streptococcus mutans serotype c (strain ATCC 700610 / UA159) protein is Aspartate carbamoyltransferase catalytic subunit.